The primary structure comprises 267 residues: Indole-3-glycerol phosphate synthase (267 aa).

Belongs to the TrpC family.

The enzyme catalyses 1-(2-carboxyphenylamino)-1-deoxy-D-ribulose 5-phosphate + H(+) = (1S,2R)-1-C-(indol-3-yl)glycerol 3-phosphate + CO2 + H2O. It participates in amino-acid biosynthesis; L-tryptophan biosynthesis; L-tryptophan from chorismate: step 4/5. This chain is Indole-3-glycerol phosphate synthase, found in Ralstonia pickettii (strain 12J).